The sequence spans 258 residues: tRNA (guanine-N(7)-)-methyltransferase (258 aa).

Residues 1-42 (MPETPLMRDNGPVNHADQDAPAVPEEGQTKDSKGSRLHPRVT) form a disordered region. Glu90, Glu115, Asp142, and Asp165 together coordinate S-adenosyl-L-methionine. Residue Asp165 is part of the active site. Substrate-binding positions include Lys169, Asp201, and 235–238 (TKFE).

This sequence belongs to the class I-like SAM-binding methyltransferase superfamily. TrmB family.

It catalyses the reaction guanosine(46) in tRNA + S-adenosyl-L-methionine = N(7)-methylguanosine(46) in tRNA + S-adenosyl-L-homocysteine. It functions in the pathway tRNA modification; N(7)-methylguanine-tRNA biosynthesis. Functionally, catalyzes the formation of N(7)-methylguanine at position 46 (m7G46) in tRNA. The sequence is that of tRNA (guanine-N(7)-)-methyltransferase from Rhodococcus jostii (strain RHA1).